The sequence spans 301 residues: Ribosomal RNA small subunit methyltransferase H (301 aa).

Residues 35-37, aspartate 55, phenylalanine 84, aspartate 105, and glutamine 112 contribute to the S-adenosyl-L-methionine site; that span reads GGH.

The protein belongs to the methyltransferase superfamily. RsmH family.

It is found in the cytoplasm. The catalysed reaction is cytidine(1402) in 16S rRNA + S-adenosyl-L-methionine = N(4)-methylcytidine(1402) in 16S rRNA + S-adenosyl-L-homocysteine + H(+). Specifically methylates the N4 position of cytidine in position 1402 (C1402) of 16S rRNA. This Chloroflexus aggregans (strain MD-66 / DSM 9485) protein is Ribosomal RNA small subunit methyltransferase H.